We begin with the raw amino-acid sequence, 228 residues long: UPF0328 protein ECU07_0040 (228 aa).

This sequence belongs to the UPF0328 family.

The polypeptide is UPF0328 protein ECU07_0040 (Encephalitozoon cuniculi (strain GB-M1) (Microsporidian parasite)).